Consider the following 525-residue polypeptide: Bifunctional purine biosynthesis protein PurH (525 aa).

The 147-residue stretch at 1–147 folds into the MGS-like domain; it reads MTKIERALIS…KNWAHVAIVT (147 aa).

Belongs to the PurH family.

The catalysed reaction is (6R)-10-formyltetrahydrofolate + 5-amino-1-(5-phospho-beta-D-ribosyl)imidazole-4-carboxamide = 5-formamido-1-(5-phospho-D-ribosyl)imidazole-4-carboxamide + (6S)-5,6,7,8-tetrahydrofolate. The enzyme catalyses IMP + H2O = 5-formamido-1-(5-phospho-D-ribosyl)imidazole-4-carboxamide. It participates in purine metabolism; IMP biosynthesis via de novo pathway; 5-formamido-1-(5-phospho-D-ribosyl)imidazole-4-carboxamide from 5-amino-1-(5-phospho-D-ribosyl)imidazole-4-carboxamide (10-formyl THF route): step 1/1. The protein operates within purine metabolism; IMP biosynthesis via de novo pathway; IMP from 5-formamido-1-(5-phospho-D-ribosyl)imidazole-4-carboxamide: step 1/1. The polypeptide is Bifunctional purine biosynthesis protein PurH (Chromobacterium violaceum (strain ATCC 12472 / DSM 30191 / JCM 1249 / CCUG 213 / NBRC 12614 / NCIMB 9131 / NCTC 9757 / MK)).